The chain runs to 153 residues: Ribosome maturation factor RimP (153 aa).

Belongs to the RimP family.

It is found in the cytoplasm. Its function is as follows. Required for maturation of 30S ribosomal subunits. This Clostridioides difficile (strain 630) (Peptoclostridium difficile) protein is Ribosome maturation factor RimP.